The chain runs to 455 residues: Bleomycin hydrolase (455 aa).

Met1 is modified (N-acetylmethionine). Residues Cys73 and His372 contribute to the active site. At Lys391 the chain carries N6-acetyllysine. Asn396 is an active-site residue.

Belongs to the peptidase C1 family. As to quaternary structure, homohexamer. Interacts with NUDT12 (via ANK repeats).

The protein resides in the cytoplasm. It localises to the cytoplasmic granule. The enzyme catalyses Inactivates bleomycin B2 (a cytotoxic glycometallopeptide) by hydrolysis of a carboxyamide bond of beta-aminoalanine, but also shows general aminopeptidase activity. The specificity varies somewhat with source, but amino acid arylamides of Met, Leu and Ala are preferred.. Its function is as follows. The normal physiological role of BLM hydrolase is unknown, but it catalyzes the inactivation of the antitumor drug BLM (a glycopeptide) by hydrolyzing the carboxamide bond of its B-aminoalaninamide moiety thus protecting normal and malignant cells from BLM toxicity. The sequence is that of Bleomycin hydrolase (BLMH) from Homo sapiens (Human).